The sequence spans 169 residues: Ribosome maturation factor RimM (169 aa).

In terms of domain architecture, PRC barrel spans 94–168; sequence DDEFYHADLI…RIVADPPEGL (75 aa).

Belongs to the RimM family. In terms of assembly, binds ribosomal protein uS19.

The protein resides in the cytoplasm. Its function is as follows. An accessory protein needed during the final step in the assembly of 30S ribosomal subunit, possibly for assembly of the head region. Essential for efficient processing of 16S rRNA. May be needed both before and after RbfA during the maturation of 16S rRNA. It has affinity for free ribosomal 30S subunits but not for 70S ribosomes. In Cereibacter sphaeroides (strain ATCC 17025 / ATH 2.4.3) (Rhodobacter sphaeroides), this protein is Ribosome maturation factor RimM.